Reading from the N-terminus, the 430-residue chain is MPIVIRNGRVIDPASNTDRVADVFIVDGRIAGVAPNLSSPKAEVFDATGMIVAPGFIDMHVHLREPGFEHAETIESGSRAAAAGGFTSICCMPNTKPVNDSAMVTSYIVEQARSKAAVNVFPIGAITKGSAGEELAAIGAMKAAGAVAISDDGLPVMNARVMRRAMEFARSYDLPIIQHCEDLNLSAGGDMHEGANSVRWGLRGIPAASEDVMVARDLVLAQLTGARYHVAHISTRNAVAMVEYGRSHGLPVTCETTPHHFGLADADMAPYDSNYKMKPPLRSCGHRDAIIEGLIAGTISAIATDHAPHPGSEKMQEFERCPFGIIGLETALALALEELVAPGKITLARLIELFTTGPESVMRLGRGTLTPGAPGDVTVFSPTVEWTYDVNQSASRSRNSPFHARTFHGGPMATIVNGGLKWSRQSSHIT.

Zn(2+)-binding residues include histidine 60 and histidine 62. Substrate contacts are provided by residues 62–64 (HLR) and asparagine 94. Zn(2+) is bound by residues aspartate 152, histidine 179, histidine 232, and aspartate 305. Aspartate 305 is an active-site residue. Substrate contacts are provided by residues histidine 309 and 323–324 (FG).

Belongs to the metallo-dependent hydrolases superfamily. DHOase family. Class I DHOase subfamily. The cofactor is Zn(2+).

The catalysed reaction is (S)-dihydroorotate + H2O = N-carbamoyl-L-aspartate + H(+). Its pathway is pyrimidine metabolism; UMP biosynthesis via de novo pathway; (S)-dihydroorotate from bicarbonate: step 3/3. Catalyzes the reversible cyclization of carbamoyl aspartate to dihydroorotate. The polypeptide is Dihydroorotase (Solibacter usitatus (strain Ellin6076)).